The following is a 232-amino-acid chain: 7-cyano-7-deazaguanine synthase (232 aa).

An ATP-binding site is contributed by 7-17 (CSGGLDSVSLA). Residues C185, C193, C196, and C199 each contribute to the Zn(2+) site.

The protein belongs to the QueC family. Requires Zn(2+) as cofactor.

It carries out the reaction 7-carboxy-7-deazaguanine + NH4(+) + ATP = 7-cyano-7-deazaguanine + ADP + phosphate + H2O + H(+). Its pathway is purine metabolism; 7-cyano-7-deazaguanine biosynthesis. Its function is as follows. Catalyzes the ATP-dependent conversion of 7-carboxy-7-deazaguanine (CDG) to 7-cyano-7-deazaguanine (preQ(0)). The protein is 7-cyano-7-deazaguanine synthase of Brucella canis (strain ATCC 23365 / NCTC 10854 / RM-666).